Reading from the N-terminus, the 463-residue chain is Annexin A7 (463 aa).

Composition is skewed to pro residues over residues 1-18 and 26-38; these read MSYPGYPPTGYPPFPGYP and FPPPGQYPYPSGF. Disordered stretches follow at residues 1–54 and 71–153; these read MSYP…SSGY and GYPG…THGT. The interval 1-140 is repeat-rich region; sequence MSYPGYPPTG…QYPGGQSPYP (140 aa). The tract at residues 5–20 is 3 X 5 AA tandem repeats of G-Y-P-P-X; that stretch reads GYPPTGYPPFPGYPPT. The span at 86–99 shows a compositional bias: gly residues; it reads GGQGFGAPPGGAGF. Annexin repeat units follow at residues 160–231, 232–303, 315–387, and 391–462; these read FDAM…ALFM, PSTY…SMCQ, QLAQ…TILQ, and NRPA…AIVG. At K208 the chain carries N6-acetyllysine.

This sequence belongs to the annexin family. As to quaternary structure, interacts with PDCD6.

Functionally, calcium/phospholipid-binding protein which promotes membrane fusion and is involved in exocytosis. In Bos taurus (Bovine), this protein is Annexin A7 (ANXA7).